Consider the following 102-residue polypeptide: Citrate lyase acyl carrier protein (102 aa).

O-(phosphoribosyl dephospho-coenzyme A)serine is present on S14.

It belongs to the CitD family. Oligomer with a subunit composition of (alpha,beta,gamma)6.

The protein resides in the cytoplasm. Functionally, covalent carrier of the coenzyme of citrate lyase. The chain is Citrate lyase acyl carrier protein from Serratia proteamaculans (strain 568).